The primary structure comprises 166 residues: Protein-export protein SecB (166 aa).

Belongs to the SecB family. In terms of assembly, homotetramer, a dimer of dimers. One homotetramer interacts with 1 SecA dimer.

Its subcellular location is the cytoplasm. In terms of biological role, one of the proteins required for the normal export of preproteins out of the cell cytoplasm. It is a molecular chaperone that binds to a subset of precursor proteins, maintaining them in a translocation-competent state. It also specifically binds to its receptor SecA. The chain is Protein-export protein SecB from Actinobacillus pleuropneumoniae serotype 7 (strain AP76).